We begin with the raw amino-acid sequence, 348 residues long: Caricain (348 aa).

The N-terminal stretch at 1 to 16 is a signal peptide; it reads MAMIPSISKLLFVAIC. Residues 17 to 132 constitute a propeptide, activation peptide; sequence LFVHMSVSFG…EEFINEDTVN (116 aa). The N-linked (GlcNAc...) asparagine glycan is linked to N86. 3 cysteine pairs are disulfide-bonded: C154-C195, C188-C227, and C285-C336. C157 is an active-site residue. Residue C157 participates in E64 binding. Residues H291 and N311 contribute to the active site.

It belongs to the peptidase C1 family. As to quaternary structure, monomer.

The catalysed reaction is Hydrolysis of proteins with broad specificity for peptide bonds, similar to those of papain and chymopapain.. Its activity is regulated as follows. Repressed by the active-site-directed cysteine protease inhibitor E64 (L-trans-epoxysuccinyl-leucylamide-(4-guanido)-butane) produced by Aspergillus japonicus. Functionally, cysteine proteinase with a high level of diversity in substrate specificity. In Carica papaya (Papaya), this protein is Caricain.